The following is a 180-amino-acid chain: tRNA (cytidine(56)-2'-O)-methyltransferase (180 aa).

Leucine 85 serves as a coordination point for S-adenosyl-L-methionine.

The protein belongs to the aTrm56 family. In terms of assembly, homodimer.

The protein resides in the cytoplasm. It catalyses the reaction cytidine(56) in tRNA + S-adenosyl-L-methionine = 2'-O-methylcytidine(56) in tRNA + S-adenosyl-L-homocysteine + H(+). Specifically catalyzes the AdoMet-dependent 2'-O-ribose methylation of cytidine at position 56 in tRNAs. This chain is tRNA (cytidine(56)-2'-O)-methyltransferase, found in Methanobrevibacter smithii (strain ATCC 35061 / DSM 861 / OCM 144 / PS).